The chain runs to 231 residues: Probable pseudouridine-5'-phosphatase (231 aa).

Residue Asp-15 is the Nucleophile of the active site. Mg(2+)-binding residues include Asp-15 and Asp-17. Asp-17 serves as the catalytic Proton donor.

Belongs to the HAD-like hydrolase superfamily. CbbY/CbbZ/Gph/YieH family. Mg(2+) is required as a cofactor.

The catalysed reaction is psi-UMP + H2O = pseudouridine + phosphate. In terms of biological role, dephosphorylates pseudouridine 5'-phosphate, a potential intermediate in rRNA degradation. The polypeptide is Probable pseudouridine-5'-phosphatase (Gs1l) (Drosophila melanogaster (Fruit fly)).